A 226-amino-acid polypeptide reads, in one-letter code: MVKSFFITGTDTDVGKTLVARTLLLEFVAHGIQCAGYKPISAGCARTPDGLRNLDAVLLQEAANLSLPYDMVNPYAFEPPIAPHIAASEARDAITLKGLSDGLRQIEQAGAELVVVEGAGGWFLPLDRKHLLSDWVKQENIPVIMVVGAKLGCLNHALLTFAAIRNDNLPVAGWVMNRLYGSMSHYQENLDTLRGLLPAPFLGEIPFVNNPLEADLRGRLDISPLL.

Position 13-18 (13-18 (DVGKTL)) interacts with ATP. T17 provides a ligand contact to Mg(2+). K38 is an active-site residue. ATP-binding positions include D55, 117-120 (EGAG), 177-178 (NR), 206-208 (PFV), and E213. Mg(2+)-binding residues include D55 and E117.

Belongs to the dethiobiotin synthetase family. Homodimer. Mg(2+) is required as a cofactor.

The protein localises to the cytoplasm. It catalyses the reaction (7R,8S)-7,8-diammoniononanoate + CO2 + ATP = (4R,5S)-dethiobiotin + ADP + phosphate + 3 H(+). Its pathway is cofactor biosynthesis; biotin biosynthesis; biotin from 7,8-diaminononanoate: step 1/2. In terms of biological role, catalyzes a mechanistically unusual reaction, the ATP-dependent insertion of CO2 between the N7 and N8 nitrogen atoms of 7,8-diaminopelargonic acid (DAPA, also called 7,8-diammoniononanoate) to form a ureido ring. The sequence is that of ATP-dependent dethiobiotin synthetase BioD from Aeromonas salmonicida (strain A449).